The primary structure comprises 423 residues: Adenosylmethionine-8-amino-7-oxononanoate aminotransferase (423 aa).

W51 serves as a coordination point for substrate. Position 111 to 112 (G111 to S112) interacts with pyridoxal 5'-phosphate. A substrate-binding site is contributed by Y144. D243 serves as a coordination point for pyridoxal 5'-phosphate. Positions 272 and 306 each coordinate substrate. N6-(pyridoxal phosphate)lysine is present on K272. P307–T308 serves as a coordination point for pyridoxal 5'-phosphate. R390 serves as a coordination point for substrate.

It belongs to the class-III pyridoxal-phosphate-dependent aminotransferase family. BioA subfamily. As to quaternary structure, homodimer. Requires pyridoxal 5'-phosphate as cofactor.

It localises to the cytoplasm. It catalyses the reaction (8S)-8-amino-7-oxononanoate + S-adenosyl-L-methionine = S-adenosyl-4-methylsulfanyl-2-oxobutanoate + (7R,8S)-7,8-diammoniononanoate. It participates in cofactor biosynthesis; biotin biosynthesis; 7,8-diaminononanoate from 8-amino-7-oxononanoate (SAM route): step 1/1. In terms of biological role, catalyzes the transfer of the alpha-amino group from S-adenosyl-L-methionine (SAM) to 7-keto-8-aminopelargonic acid (KAPA) to form 7,8-diaminopelargonic acid (DAPA). It is the only aminotransferase known to utilize SAM as an amino donor. In Corynebacterium glutamicum (strain ATCC 13032 / DSM 20300 / JCM 1318 / BCRC 11384 / CCUG 27702 / LMG 3730 / NBRC 12168 / NCIMB 10025 / NRRL B-2784 / 534), this protein is Adenosylmethionine-8-amino-7-oxononanoate aminotransferase.